Here is a 365-residue protein sequence, read N- to C-terminus: MESRCKKGYFRLAVIGLSKAKDCWEKNACAVTFIGDGGTSEGDFHAGLNFAAVMEAPVVFICRNNGWAISTHISEQFRSDGIVVKGQAYGIRSIRVDGNDALAVYSAVCSAREMAVTEQRPVLIEMMIYRVGHHSTSDDSTKYRAADEIQYWKMSRNSVNRFRKSVEDNGWWSEEDESKLRSNARKQLLQAIQAAEKWEKQPLTELFNDVYDVKPKNLEEEELGLKELIEKQPQDYMMLKELIPNWILGIGTLALRYDFQETLFNGWHAIAELQQLKLKIKLNSLLNDQADTESLKAARNSALNVIQAMIIHLVLTLKGRFSLPLTEETVRFNEPIQLNQNMVKDGGYTAELFPIRKEEQGEVRR.

It belongs to the ketopantoate reductase family.

The enzyme catalyses (R)-pantoate + NADP(+) = 2-dehydropantoate + NADPH + H(+). Its pathway is cofactor biosynthesis; (R)-pantothenate biosynthesis; (R)-pantoate from 3-methyl-2-oxobutanoate: step 2/2. Its function is as follows. Catalyzes the NADPH-dependent reduction of ketopantoate into pantoic acid. The sequence is that of Putative 2-dehydropantoate 2-reductase (KPR) from Arabidopsis thaliana (Mouse-ear cress).